The following is a 377-amino-acid chain: Flap endonuclease 1 (377 aa).

An N-domain region spans residues 1–105 (MGIKGLSQVI…GELAKRASRQ (105 aa)). Aspartate 34 serves as a coordination point for Mg(2+). Arginine 47 and arginine 71 together coordinate DNA. Residue aspartate 87 participates in Mg(2+) binding. A disordered region spans residues 96-115 (GELAKRASRQQKAREEREEA). Residues 123-254 (MVDKFAKRTV…ARAVELIRQH (132 aa)) form an I-domain region. Mg(2+)-binding residues include glutamate 159, glutamate 161, aspartate 180, and aspartate 182. DNA is bound at residue glutamate 159. Residues glycine 232 and aspartate 234 each contribute to the DNA site. Aspartate 234 provides a ligand contact to Mg(2+). The segment at 337–345 (PQGRLDSFF) is interaction with PCNA. Residues 350–377 (STKKEKEKPKAAAKRKRDTKSSAPKKKR) are disordered. Positions 360–377 (AAAKRKRDTKSSAPKKKR) are enriched in basic residues.

It belongs to the XPG/RAD2 endonuclease family. FEN1 subfamily. Interacts with PCNA. Three molecules of rad2 bind to one PCNA trimer with each molecule binding to one PCNA monomer. PCNA stimulates the nuclease activity without altering cleavage specificity. Mg(2+) is required as a cofactor. In terms of processing, phosphorylated. Phosphorylation upon DNA damage induces relocalization to the nuclear plasma.

The protein localises to the nucleus. The protein resides in the nucleolus. It is found in the nucleoplasm. It localises to the mitochondrion. Functionally, structure-specific nuclease with 5'-flap endonuclease and 5'-3' exonuclease activities involved in DNA replication and repair. During DNA replication, cleaves the 5'-overhanging flap structure that is generated by displacement synthesis when DNA polymerase encounters the 5'-end of a downstream Okazaki fragment. It enters the flap from the 5'-end and then tracks to cleave the flap base, leaving a nick for ligation. Also involved in the long patch base excision repair (LP-BER) pathway, by cleaving within the apurinic/apyrimidinic (AP) site-terminated flap. Acts as a genome stabilization factor that prevents flaps from equilibrating into structures that lead to duplications and deletions. Also possesses 5'-3' exonuclease activity on nicked or gapped double-stranded DNA, and exhibits RNase H activity. Also involved in replication and repair of rDNA and in repairing mitochondrial DNA. In Schizosaccharomyces japonicus (strain yFS275 / FY16936) (Fission yeast), this protein is Flap endonuclease 1.